We begin with the raw amino-acid sequence, 407 residues long: Protein phosphatase methylesterase 1 (407 aa).

Residues 1-53 (MSDLQKSFAKSKLAKLPPEPPPIPESVADEDDDSGSSTETVTPSPVKQLFARP) are disordered. Catalysis depends on residues S185, D211, and H342. Positions 388–401 (GAGVPLGKAEGGTT) are enriched in gly residues. A disordered region spans residues 388 to 407 (GAGVPLGKAEGGTTGSFKRS).

This sequence belongs to the AB hydrolase superfamily.

The catalysed reaction is [phosphatase 2A protein]-C-terminal L-leucine methyl ester + H2O = [phosphatase 2A protein]-C-terminal L-leucine + methanol + H(+). In terms of biological role, demethylates proteins that have been reversibly carboxymethylated. Demethylates the phosphatase PP2A catalytic subunit. This Emericella nidulans (strain FGSC A4 / ATCC 38163 / CBS 112.46 / NRRL 194 / M139) (Aspergillus nidulans) protein is Protein phosphatase methylesterase 1 (ppe1).